Here is a 926-residue protein sequence, read N- to C-terminus: OTU domain-containing protein 7A (926 aa).

The tract at residues 75–99 (PHVFNEGRGPKQPEREPQPGHKVER) is disordered. Residues 82–99 (RGPKQPEREPQPGHKVER) are compositionally biased toward basic and acidic residues. Residue Ser119 is modified to Phosphoserine. Residues 168-410 (ERDLIEQATM…AVDPGKDWEW (243 aa)) form a TRAF-binding region. The catalytic stretch occupies residues 183–449 (AGRLNWWSTV…VTWIRIPSET (267 aa)). An OTU domain is found at 199 to 374 (LLPLATTGDG…QAHFSALVSM (176 aa)). Residue Asp207 is part of the active site. Catalysis depends on Cys210, which acts as the Nucleophile. Residue His367 is the Proton acceptor of the active site. Disordered stretches follow at residues 452–514 (PLAQ…DSVA), 537–613 (GLVH…DAWK), and 668–768 (EQEQ…APAR). Residues 481–491 (VCSNSNSNNGK) show a composition bias toward low complexity. The span at 492 to 510 (NGKDKEKEKQRKEKDKTRA) shows a compositional bias: basic and acidic residues. The Nuclear localization signal signature appears at 494–509 (KDKEKEKQRKEKDKTR). 3 stretches are compositionally biased toward low complexity: residues 576 to 592 (GASA…PSPT), 677 to 691 (ATAA…AATA), and 729 to 742 (PAAG…AGGT). Arg880 is subject to Omega-N-methylarginine. Residues 884–919 (GPVQRRCQRENCAFYGRAETEHYCSYCYREELRRRR) form an A20-type zinc finger. Zn(2+)-binding residues include Cys890, Cys895, Cys907, and Cys910.

The protein belongs to the peptidase C64 family.

The protein localises to the cytoplasm. It is found in the nucleus. It carries out the reaction Thiol-dependent hydrolysis of ester, thioester, amide, peptide and isopeptide bonds formed by the C-terminal Gly of ubiquitin (a 76-residue protein attached to proteins as an intracellular targeting signal).. Deubiquitinase, which cleaves 'Lys-11'-linked polyubiquitin chains. Might be required for PA28-20S proteasome assembly. The chain is OTU domain-containing protein 7A (OTUD7A) from Homo sapiens (Human).